A 374-amino-acid chain; its full sequence is Dihydroorotate dehydrogenase (quinone) (374 aa).

Residues 78 to 82 (AGFDK) and Thr102 contribute to the FMN site. Position 82 (Lys82) interacts with substrate. Residue 127–131 (NRMGF) coordinates substrate. 2 residues coordinate FMN: Asn159 and Asn192. A substrate-binding site is contributed by Asn192. Residue Ser195 is the Nucleophile of the active site. Substrate is bound at residue Asn197. 2 residues coordinate FMN: Lys230 and Thr258. 259 to 260 (NT) is a binding site for substrate. FMN-binding positions include Gly287, Gly316, and 337-338 (YT).

The protein belongs to the dihydroorotate dehydrogenase family. Type 2 subfamily. Monomer. FMN serves as cofactor.

It localises to the cell membrane. The enzyme catalyses (S)-dihydroorotate + a quinone = orotate + a quinol. It functions in the pathway pyrimidine metabolism; UMP biosynthesis via de novo pathway; orotate from (S)-dihydroorotate (quinone route): step 1/1. Functionally, catalyzes the conversion of dihydroorotate to orotate with quinone as electron acceptor. This chain is Dihydroorotate dehydrogenase (quinone), found in Acaryochloris marina (strain MBIC 11017).